Consider the following 302-residue polypeptide: NAD kinase 1 (302 aa).

Aspartate 67 serves as the catalytic Proton acceptor. Residues 67-68 (DG), arginine 72, 148-149 (ND), lysine 178, and aspartate 180 each bind NAD(+).

This sequence belongs to the NAD kinase family. A divalent metal cation serves as cofactor.

The protein localises to the cytoplasm. It catalyses the reaction NAD(+) + ATP = ADP + NADP(+) + H(+). Its function is as follows. Involved in the regulation of the intracellular balance of NAD and NADP, and is a key enzyme in the biosynthesis of NADP. Catalyzes specifically the phosphorylation on 2'-hydroxyl of the adenosine moiety of NAD to yield NADP. This Prochlorococcus marinus (strain NATL2A) protein is NAD kinase 1.